A 304-amino-acid chain; its full sequence is Glycine--tRNA ligase alpha subunit (304 aa).

Belongs to the class-II aminoacyl-tRNA synthetase family. Tetramer of two alpha and two beta subunits.

The protein resides in the cytoplasm. The catalysed reaction is tRNA(Gly) + glycine + ATP = glycyl-tRNA(Gly) + AMP + diphosphate. The chain is Glycine--tRNA ligase alpha subunit from Yersinia enterocolitica serotype O:8 / biotype 1B (strain NCTC 13174 / 8081).